Here is a 152-residue protein sequence, read N- to C-terminus: Sec-independent protein translocase protein TatB (152 aa).

Residues 1-21 (MFDVAPSELLLVAVVALVVIG) traverse the membrane as a helical segment. The span at 60-71 (EDMEKRWAEENA) shows a compositional bias: basic and acidic residues. The interval 60–152 (EDMEKRWAEE…KEADQQEKQS (93 aa)) is disordered. Low complexity-rich tracts occupy residues 84-98 (TAST…PVSD) and 124-140 (AANH…STPA). The span at 141 to 152 (KPKEADQQEKQS) shows a compositional bias: basic and acidic residues.

This sequence belongs to the TatB family. As to quaternary structure, the Tat system comprises two distinct complexes: a TatABC complex, containing multiple copies of TatA, TatB and TatC subunits, and a separate TatA complex, containing only TatA subunits. Substrates initially bind to the TatABC complex, which probably triggers association of the separate TatA complex to form the active translocon.

The protein resides in the cell inner membrane. In terms of biological role, part of the twin-arginine translocation (Tat) system that transports large folded proteins containing a characteristic twin-arginine motif in their signal peptide across membranes. Together with TatC, TatB is part of a receptor directly interacting with Tat signal peptides. TatB may form an oligomeric binding site that transiently accommodates folded Tat precursor proteins before their translocation. The chain is Sec-independent protein translocase protein TatB from Zymomonas mobilis subsp. mobilis (strain ATCC 31821 / ZM4 / CP4).